The sequence spans 153 residues: Ribosome maturation factor RimP (153 aa).

Belongs to the RimP family.

It is found in the cytoplasm. Its function is as follows. Required for maturation of 30S ribosomal subunits. This Clostridium botulinum (strain ATCC 19397 / Type A) protein is Ribosome maturation factor RimP.